The chain runs to 810 residues: F-BAR domain only protein 2 (810 aa).

In terms of domain architecture, F-BAR spans 3–250; that stretch reads MAYFVENFWG…NMANTTVESL (248 aa). The mediates dimerization and binding to membranes enriched in Pi(4,5)-P2 and induces their tubulation stretch occupies residues 3-274; the sequence is MAYFVENFWG…PGLIEFEECD (272 aa). Residues 87–156 adopt a coiled-coil conformation; the sequence is HLDLVRKLQE…CVEQERLKKE (70 aa). Residue lysine 297 forms a Glycyl lysine isopeptide (Lys-Gly) (interchain with G-Cter in SUMO2) linkage. Positions 301–352 are disordered; the sequence is DAESVECPDADSLNIPDVDEEGYSIKPETNQNDTKENHFYSSSDSDSEDEEP. Serine 312 carries the post-translational modification Phosphoserine. Threonine 385 carries the post-translational modification Phosphothreonine. Serine 387, serine 394, and serine 403 each carry phosphoserine. Residues 404–537 are disordered; it reads NEELTKSKPS…VSRGPSPVSL (134 aa). Residues 433-456 show a composition bias toward low complexity; that stretch reads PSLDSSSSSSLTSSSSARPTTPLS. Phosphoserine is present on residues serine 488, serine 493, serine 496, serine 508, serine 510, serine 511, and serine 533. The segment covering 502–521 has biased composition (low complexity); sequence PLARAESSSSISSSASLSAA. Positions 521–810 are mediates interaction with DAB2, EPS15, EPS15R and ITSN1; sequence ANTPTVGVSR…FATGRYLADC (290 aa). Residues 542 to 809 enclose the MHD domain; sequence TLPVAVALTE…RFATGRYLAD (268 aa).

Belongs to the FCHO family. In terms of assembly, homodimer; disulfide-linked. May form homotetramer. Interacts with AP2A1. Interacts with EPS15, EPS15R, ITSN1 and ITSN2; recruit those scaffolding proteins which in turn may interact with the adaptor protein complex AP-2 at the plasma membrane. Interacts with DAB2 (via DPF motifs); mediates LDL receptor/LDLR endocytosis. Post-translationally, ubiquitinated. Mainly undergoes monoubiquitination but also polyubiquitination.

The protein localises to the membrane. The protein resides in the clathrin-coated pit. Its function is as follows. Functions in an early step of clathrin-mediated endocytosis. Has both a membrane binding/bending activity and the ability to recruit proteins essential to the formation of functional clathrin-coated pits. Has a lipid-binding activity with a preference for membranes enriched in phosphatidylserine and phosphoinositides (Pi(4,5) biphosphate) like the plasma membrane. Its membrane-bending activity might be important for the subsequent action of clathrin and adaptors in the formation of clathrin-coated vesicles. Involved in adaptor protein complex AP-2-dependent endocytosis of the transferrin receptor, it also functions in the AP-2-independent endocytosis of the LDL receptor. In Homo sapiens (Human), this protein is F-BAR domain only protein 2 (FCHO2).